The sequence spans 229 residues: Urease accessory protein UreF (229 aa).

The protein belongs to the UreF family. In terms of assembly, ureD, UreF and UreG form a complex that acts as a GTP-hydrolysis-dependent molecular chaperone, activating the urease apoprotein by helping to assemble the nickel containing metallocenter of UreC. The UreE protein probably delivers the nickel.

It localises to the cytoplasm. Functionally, required for maturation of urease via the functional incorporation of the urease nickel metallocenter. This is Urease accessory protein UreF from Corynebacterium efficiens (strain DSM 44549 / YS-314 / AJ 12310 / JCM 11189 / NBRC 100395).